The chain runs to 248 residues: Probable transcriptional regulatory protein RHECIAT_CH0003714 (248 aa).

This sequence belongs to the TACO1 family.

The protein resides in the cytoplasm. This Rhizobium etli (strain CIAT 652) protein is Probable transcriptional regulatory protein RHECIAT_CH0003714.